Consider the following 476-residue polypeptide: Splicing factor ESS-2 homolog (476 aa).

N-acetylmethionine is present on methionine 1. The segment covering 1 to 18 (METPGASASSLLLPAASR) has biased composition (low complexity). Disordered regions lie at residues 1–36 (METP…SKQR) and 91–148 (LGKM…LPSL). Threonine 3 is modified (phosphothreonine). Positions 133–142 (DGEAGEEEEK) are enriched in acidic residues. Residue lysine 142 forms a Glycyl lysine isopeptide (Lys-Gly) (interchain with G-Cter in SUMO2) linkage. A Phosphoserine modification is found at serine 292. Threonine 386 carries the phosphothreonine modification. 2 positions are modified to phosphoserine: serine 391 and serine 395. The segment at 413–465 (ALRASYTPSPARSTHLKTPASGLQTPTSTPAPGSATRTPLTQDPASITDNLLQ) is disordered. Low complexity predominate over residues 437–451 (TPTSTPAPGSATRTP). Over residues 452 to 463 (LTQDPASITDNL) the composition is skewed to polar residues.

Belongs to the ESS2 family. In terms of assembly, identified in the spliceosome C complex. Interacts with FRA10AC1. Highly expressed in heart, brain and skeletal muscle. Detected at low levels in placenta.

The protein resides in the nucleus. Its function is as follows. May be involved in pre-mRNA splicing. In Homo sapiens (Human), this protein is Splicing factor ESS-2 homolog.